The chain runs to 65 residues: Large ribosomal subunit protein bL33c (65 aa).

Belongs to the bacterial ribosomal protein bL33 family.

Its subcellular location is the plastid. It localises to the chloroplast. In Staurastrum punctulatum (Green alga), this protein is Large ribosomal subunit protein bL33c.